A 195-amino-acid chain; its full sequence is Protein GrpE (195 aa).

Residues 1-14 (MQEPHDQEPIEKQK) show a composition bias toward basic and acidic residues. A disordered region spans residues 1–45 (MQEPHDQEPIEKQKLPGMDDVLETEHSGTVAGNTERAGEDAAPSL).

This sequence belongs to the GrpE family. In terms of assembly, homodimer.

Its subcellular location is the cytoplasm. Participates actively in the response to hyperosmotic and heat shock by preventing the aggregation of stress-denatured proteins, in association with DnaK and GrpE. It is the nucleotide exchange factor for DnaK and may function as a thermosensor. Unfolded proteins bind initially to DnaJ; upon interaction with the DnaJ-bound protein, DnaK hydrolyzes its bound ATP, resulting in the formation of a stable complex. GrpE releases ADP from DnaK; ATP binding to DnaK triggers the release of the substrate protein, thus completing the reaction cycle. Several rounds of ATP-dependent interactions between DnaJ, DnaK and GrpE are required for fully efficient folding. This chain is Protein GrpE, found in Nitrosomonas europaea (strain ATCC 19718 / CIP 103999 / KCTC 2705 / NBRC 14298).